We begin with the raw amino-acid sequence, 261 residues long: Triosephosphate isomerase (261 aa).

Position 10 to 12 (10 to 12 (NWK)) interacts with substrate. The active-site Electrophile is histidine 100. The active-site Proton acceptor is the glutamate 172. Substrate-binding positions include glycine 178, serine 218, and 239–240 (GG).

This sequence belongs to the triosephosphate isomerase family. As to quaternary structure, homodimer.

Its subcellular location is the cytoplasm. It catalyses the reaction D-glyceraldehyde 3-phosphate = dihydroxyacetone phosphate. It participates in carbohydrate biosynthesis; gluconeogenesis. It functions in the pathway carbohydrate degradation; glycolysis; D-glyceraldehyde 3-phosphate from glycerone phosphate: step 1/1. Its function is as follows. Involved in the gluconeogenesis. Catalyzes stereospecifically the conversion of dihydroxyacetone phosphate (DHAP) to D-glyceraldehyde-3-phosphate (G3P). This chain is Triosephosphate isomerase, found in Mycolicibacterium paratuberculosis (strain ATCC BAA-968 / K-10) (Mycobacterium paratuberculosis).